Reading from the N-terminus, the 377-residue chain is Sodium-dependent organic anion transporter (377 aa).

At 1 to 29 the chain is on the extracellular side; it reads MRANCSSSSACPANSSEEELPVGLEVHGN. The N-linked (GlcNAc...) asparagine glycan is linked to asparagine 4. The chain crosses the membrane as a helical span at residues 30 to 50; that stretch reads LELVFTVVSTVMMGLLMFSLG. Over 51-67 the chain is Cytoplasmic; sequence CSVEIRKLWSHIRRPWG. A helical transmembrane segment spans residues 68 to 88; the sequence is IAVGLLCQFGLMPFTAYLLAI. Residues 89–97 are Extracellular-facing; it reads SFSLKPVQA. The chain crosses the membrane as a helical span at residues 98 to 118; that stretch reads IAVLIMGCCPGGTISNIFTFW. The Cytoplasmic portion of the chain corresponds to 119-133; that stretch reads VDGDMDLSISMTTCS. The chain crosses the membrane as a helical span at residues 134-154; the sequence is TVAALGMMPLCIYLYTWSWSL. Topologically, residues 155 to 159 are extracellular; the sequence is QQNLT. An N-linked (GlcNAc...) asparagine glycan is attached at asparagine 157. A helical membrane pass occupies residues 160 to 180; the sequence is IPYQNIGITLVCLTIPVAFGV. At 181-195 the chain is on the cytoplasmic side; that stretch reads YVNYRWPKQSKIILK. Residues 196 to 216 form a helical membrane-spanning segment; sequence IGAVVGGVLLLVVAVAGVVLA. Residues 217–226 are Extracellular-facing; the sequence is KGSWNSDITL. The helical transmembrane segment at 227-247 threads the bilayer; that stretch reads LTISFIFPLIGHVTGFLLALF. Topologically, residues 248–266 are cytoplasmic; that stretch reads THQSWQRCRTISLETGAQN. Residues 267–285 traverse the membrane as a helical segment; that stretch reads IQMCITMLQLSFTAEHLVQ. At 286–290 the chain is on the extracellular side; it reads MLSFP. Residues 291–311 traverse the membrane as a helical segment; that stretch reads LAYGLFQLIDGFLIVAAYQTY. At 312 to 377 the chain is on the cytoplasmic side; it reads KRRLKNKHGK…EPVGHITSCE (66 aa).

The protein belongs to the bile acid:sodium symporter (BASS) (TC 2.A.28) family. In terms of processing, glycosylated. As to expression, highly expressed in testis, placenta and pancreas. Moderately expressed in heart, lung and mammary gland. Weakly expressed in brain, colon, kidney, liver, ovary, prostate, small intestine, spleen and thymus.

The protein resides in the membrane. It carries out the reaction estrone 3-sulfate(out) + 2 Na(+)(out) = estrone 3-sulfate(in) + 2 Na(+)(in). It catalyses the reaction 17beta-estradiol 3-sulfate(out) + 2 Na(+)(out) = 17beta-estradiol 3-sulfate(in) + 2 Na(+)(in). The enzyme catalyses dehydroepiandrosterone 3-sulfate(out) + 2 Na(+)(out) = dehydroepiandrosterone 3-sulfate(in) + 2 Na(+)(in). The catalysed reaction is androst-5-ene-diol 3-sulfate(out) + 2 Na(+)(out) = androst-5-ene-diol 3-sulfate(in) + 2 Na(+)(in). It carries out the reaction pregnenolone sulfate(out) + 2 Na(+)(out) = pregnenolone sulfate(in) + 2 Na(+)(in). It catalyses the reaction taurolithocholate 3-sulfate(out) + 2 Na(+)(out) = taurolithocholate 3-sulfate(in) + 2 Na(+)(in). The enzyme catalyses androsterone 3alpha-sulfate(out) + 2 Na(+)(out) = androsterone 3alpha-sulfate(in) + 2 Na(+)(in). The catalysed reaction is 5alpha-dihydrotestosterone sulfate(out) + 2 Na(+)(out) = 5alpha-dihydrotestosterone sulfate(in) + 2 Na(+)(in). It carries out the reaction 17beta-estradiol 17-sulfate(out) + 2 Na(+)(out) = 17beta-estradiol 17-sulfate(in) + 2 Na(+)(in). It catalyses the reaction 17alpha-hydroxypregnenolone 3-sulfate(out) + 2 Na(+)(out) = 17alpha-hydroxypregnenolone 3-sulfate(in) + 2 Na(+)(in). The enzyme catalyses epiandrosterone 3-sulfate(out) + 2 Na(+)(out) = epiandrosterone 3-sulfate(in) + 2 Na(+)(in). The catalysed reaction is epitestosterone 17-sulfate(out) + 2 Na(+)(out) = epitestosterone 17-sulfate(in) + 2 Na(+)(in). It carries out the reaction testosterone 17-sulfate(out) + 2 Na(+)(out) = testosterone 17-sulfate(in) + 2 Na(+)(in). It catalyses the reaction 16alpha-hydroxydehydroepiandrosterone 3-sulfate(out) + 2 Na(+)(out) = 16alpha-hydroxydehydroepiandrosterone 3-sulfate(in) + 2 Na(+)(in). In terms of biological role, transports sulfoconjugated steroid hormones from the extracellular compartment into the cytosol in a sodium-dependent manner without hydrolysis. Steroid sulfate hormones are commonly considered to be biologically inactive metabolites, that may be activated by steroid sulfatases into free steroids. May play an important role by delivering sulfoconjugated steroids to specific target cells in reproductive organs. May play a role transporting the estriol precursor 16alpha-hydroxydehydroepiandrosterone 3-sulfate (16a-OH-DHEAS) at the fetal blood vessel endothelium. Can also transport other sulfoconjugated molecules such as taurolithocholic acid-3-sulfate and sulfoconjugated pyrenes. This chain is Sodium-dependent organic anion transporter (SLC10A6), found in Homo sapiens (Human).